Here is a 74-residue protein sequence, read N- to C-terminus: Brevinin-2Tb (74 aa).

An N-terminal signal peptide occupies residues 1–22; sequence MFTMKKSLLLFFFLGTISLSLC. Residues 23 to 40 constitute a propeptide that is removed on maturation; the sequence is QEERNADEDDGEMTEEEK. Cys68 and Cys74 are disulfide-bonded.

This sequence belongs to the frog skin active peptide (FSAP) family. Brevinin subfamily. In terms of tissue distribution, expressed by the skin glands.

It localises to the secreted. Antimicrobial peptide. This Rana temporaria (European common frog) protein is Brevinin-2Tb.